The primary structure comprises 434 residues: Protein POLLENLESS 3 (434 aa).

The disordered stretch occupies residues 13–47; the sequence is VYYTPPPARTSDHVAAMPMTERRRPPYSCSSSSER. Positions 34 to 37 match the Nuclear localization signal 1 motif; the sequence is RRRP. TPR repeat units lie at residues 95 to 131, 133 to 164, 191 to 224, and 241 to 274; these read DSAL…ESQD, IDNL…LEQG, ARIL…ERDK, and PEAK…AVEM. A coiled-coil region spans residues 142 to 166; the sequence is KKSGRIEEEAVLLEHKLQTLEQGMG. A disordered region spans residues 309-329; it reads TANKNYSDVSSSPASVRPNSA. Polar residues predominate over residues 310 to 326; it reads ANKNYSDVSSSPASVRP. The Nuclear localization signal 2 motif lies at 377 to 380; it reads KRKK. Over residues 393–408 the composition is skewed to basic and acidic residues; sequence VKDTADGPKSESKKSW. The segment at 393-434 is disordered; sequence VKDTADGPKSESKKSWADIAEEEEAEEEEEERLQGELKTAEM. Residues 408–434 are a coiled coil; the sequence is WADIAEEEEAEEEEEERLQGELKTAEM. Positions 411–423 are enriched in acidic residues; it reads IAEEEEAEEEEEE. Residues 424-434 are compositionally biased toward basic and acidic residues; it reads RLQGELKTAEM.

It belongs to the MS5 protein family. In terms of tissue distribution, expressed at low levels mostly in floral organs during meiosis. Also barely detectable in leaves, stems and roots.

The protein localises to the nucleus. Its function is as follows. Essential for male fertility, especially for microspore and pollen grain production. Involved in the regulation of cell division after male meiosis I and II to facilitate exit from meiosis and transition to G1. This Arabidopsis thaliana (Mouse-ear cress) protein is Protein POLLENLESS 3.